We begin with the raw amino-acid sequence, 915 residues long: Transferrin-binding protein A (915 aa).

An N-terminal signal peptide occupies residues 1–24 (MQQQHLFRFNILCLSLMTALPAYA). Over 25 to 187 (ENVQAGQAQE…ADDVIGEGRQ (163 aa)) the chain is Periplasmic. The TonB box signature appears at 38–45 (DTIQVKAK). In terms of domain architecture, TBDR plug spans 51-176 (RDNEVTGLGK…LAGSVAFQTK (126 aa)). Residues 121–139 (SYTAQAALGGTRTAGSSGA) form a plug loop, interacts with transferrin region. Residues 187–915 (QWGIQSKTAY…NYTFSLEMKF (729 aa)) enclose the TBDR beta-barrel domain. The chain crosses the membrane as a beta stranded span at residues 188 to 197 (WGIQSKTAYS). At 198 to 203 (GKNRGL) the chain is on the extracellular side. Residues 204–213 (TQSIALAGRI) form a beta stranded membrane-spanning segment. Residues 214–215 (GG) are Periplasmic-facing. Residues 216–225 (AEALLIHTGR) traverse the membrane as a beta stranded segment. The Extracellular portion of the chain corresponds to 226 to 309 (RAGEIRAHED…FLADPLSYES (84 aa)). The beta stranded transmembrane segment at 310–319 (RSWLFRPGFR) threads the bilayer. Over 320-324 (FENKR) the chain is Periplasmic. Residues 325–334 (HYIGGILEHT) form a beta stranded membrane-spanning segment. The Extracellular portion of the chain corresponds to 335-406 (QQTFDTRDMT…VFYDETHTKS (72 aa)). The interval 351-361 (KAVFDANKKQA) is L3 helix finger, interacts with transferrin. The chain crosses the membrane as a beta stranded span at residues 407–415 (RYGLEYVYT). Topologically, residues 416–423 (NADKDTWA) are periplasmic. The beta stranded transmembrane segment at 424 to 433 (DYARLSYDRQ) threads the bilayer. Over 434-478 (GIGLDNHFQQTHCSADGSDKYCRPSADKPFSYYKSDRVIYGESHR) the chain is Extracellular. The chain crosses the membrane as a beta stranded span at residues 479-488 (LLQAAFKKSF). Topologically, residues 489-494 (DTAKIR) are periplasmic. Residues 495 to 504 (HNLSVNLGFD) traverse the membrane as a beta stranded segment. Residues 505 to 583 (RFGSNLRHQD…PRSINGKSYY (79 aa)) lie on the Extracellular side of the membrane. Residues 523 to 542 (AYSSNTPPQNNGKKISPNGS) form a disordered region. Residues 584–592 (AAVRDNVRL) traverse the membrane as a beta stranded segment. The Periplasmic portion of the chain corresponds to 593 to 594 (GR). A beta stranded membrane pass occupies residues 595 to 603 (WADVGAGLR). Residues 604 to 623 (YDYRSTHSDDGSVSTGTHRT) are Extracellular-facing. The beta stranded transmembrane segment at 624–633 (LSWNAGIVLK) threads the bilayer. Over 634–637 (PTDW) the chain is Periplasmic. A beta stranded transmembrane segment spans residues 638–647 (LDLTYRTSTG). Topologically, residues 648–675 (FRLPSFAEMYGWRAGVQSKAVKIDPEKS) are extracellular. The chain crosses the membrane as a beta stranded span at residues 676 to 685 (FNKEAGIVFK). The Periplasmic segment spans residues 686 to 689 (GDFG). A beta stranded membrane pass occupies residues 690-699 (NLEASWFNNA). Topologically, residues 700–733 (YRDLIVRGYEAQIKDGKEEAKGDPAYLNAQSARI) are extracellular. A beta stranded membrane pass occupies residues 734–743 (TGINILGKID). Over 744 to 755 (WNGVWDKLPEGW) the chain is Periplasmic. The chain crosses the membrane as a beta stranded span at residues 756–765 (YSTFAYNRVR). Residues 766–790 (VRDIKKRADRTDIQSHLFDAIQPSR) are Extracellular-facing. Residues 791 to 799 (YVVGLGYDQ) form a beta stranded membrane-spanning segment. Topologically, residues 800-802 (PEG) are periplasmic. The beta stranded transmembrane segment at 803-811 (KWGVNGMLT) threads the bilayer. Residues 812 to 845 (YSKAKEITELLGSRALLNGNSRNTKATARRTRPW) lie on the Extracellular side of the membrane. The beta stranded transmembrane segment at 846–855 (YIVDVSGYYT) threads the bilayer. At 856 to 860 (VKKHF) the chain is on the periplasmic side. Residues 861 to 870 (TLRAGVYNLL) traverse the membrane as a beta stranded segment. At 871–905 (NYRYVTWENVRQTAGGAVNQHKNVGVYNRYAAPGR) the chain is on the extracellular side. Residues 898 to 915 (NRYAAPGRNYTFSLEMKF) carry the TonB C-terminal box motif. The beta stranded transmembrane segment at 906 to 915 (NYTFSLEMKF) threads the bilayer.

This sequence belongs to the TonB-dependent receptor family. Binds both human apo- and holo-transferrin (TF), via the TF C-terminus. Forms a large complex with TF and TbpB.

It is found in the cell outer membrane. In terms of biological role, neisseria acquires iron by extracting it from serum transferrin (TF) in its human host. Acts as a TF receptor and is required for TF utilization. Binds both apo- and holo-TF, via the TF C-terminus. In Neisseria meningitidis serogroup B (strain ATCC BAA-335 / MC58), this protein is Transferrin-binding protein A.